Consider the following 436-residue polypeptide: Na(+)/H(+) antiporter NhaA (436 aa).

11 helical membrane-spanning segments follow: residues 31-51 (VGGA…NSPG), 74-94 (LSLG…IAGL), 112-132 (IVPI…YTLI), 143-163 (GWAI…AVIS), 173-193 (FLLT…AVFY), 196-216 (NLQP…TWAV), 222-242 (SWYL…ESGV), 285-305 (VAVP…WAGF), 315-335 (IGII…ATFL), 350-370 (WIDV…SLLI), and 384-404 (HAKV…TVIL).

Belongs to the NhaA Na(+)/H(+) (TC 2.A.33) antiporter family.

It is found in the cell membrane. It carries out the reaction Na(+)(in) + 2 H(+)(out) = Na(+)(out) + 2 H(+)(in). In terms of biological role, na(+)/H(+) antiporter that extrudes sodium in exchange for external protons. In Renibacterium salmoninarum (strain ATCC 33209 / DSM 20767 / JCM 11484 / NBRC 15589 / NCIMB 2235), this protein is Na(+)/H(+) antiporter NhaA.